Here is a 257-residue protein sequence, read N- to C-terminus: Small ribosomal subunit protein uS2 (257 aa).

Residues 229–257 are disordered; sequence QFTPATTSSQEVDKASEQVEIAADDIDEE.

Belongs to the universal ribosomal protein uS2 family.

This chain is Small ribosomal subunit protein uS2, found in Caldicellulosiruptor bescii (strain ATCC BAA-1888 / DSM 6725 / KCTC 15123 / Z-1320) (Anaerocellum thermophilum).